The primary structure comprises 593 residues: Epidermal growth factor receptor kinase substrate 8-like protein 3 (593 aa).

The 128-residue stretch at 28–155 (QHRVEHLMTC…ALEEELEQRP (128 aa)) folds into the PTB domain. 3 disordered regions span residues 149–171 (EELEQRPRLGGLQPGQDRWRGPA), 184–239 (LEPG…ERDE), and 374–451 (ADWT…PAQP). The residue at position 231 (serine 231) is a Phosphoserine. A compositionally biased stretch (polar residues) spans 386 to 401 (PTFSDDWQLPEPSSQA). Positions 425 to 435 (PQEKTHNHDPQ) are enriched in basic and acidic residues. The SH3 domain maps to 450-509 (QPALKMQVLYEFEARNPRELTVVQGEKLEVLDHSKRWWLVKNEAGRSGYIPSNILEPLQP).

It belongs to the EPS8 family. As to quaternary structure, interacts with ABI1. Part of a complex that contains SOS1, ABI1 and EPS8L2. Interacts with FASLG.

It localises to the cytoplasm. This Homo sapiens (Human) protein is Epidermal growth factor receptor kinase substrate 8-like protein 3 (EPS8L3).